We begin with the raw amino-acid sequence, 276 residues long: Phosphate import ATP-binding protein PstB 2 (276 aa).

The region spanning 22-262 (MAAVNLTLGF…PKHAETARYV (241 aa)) is the ABC transporter domain. Residue 54–61 (GPTGSGKT) coordinates ATP.

The protein belongs to the ABC transporter superfamily. Phosphate importer (TC 3.A.1.7) family. In terms of assembly, the complex is composed of two ATP-binding proteins (PstB), two transmembrane proteins (PstC and PstA) and a solute-binding protein (PstS).

It is found in the cell membrane. It carries out the reaction phosphate(out) + ATP + H2O = ADP + 2 phosphate(in) + H(+). In terms of biological role, part of the ABC transporter complex PstSACB involved in phosphate import. Responsible for energy coupling to the transport system. The polypeptide is Phosphate import ATP-binding protein PstB 2 (Mycobacterium bovis (strain ATCC BAA-935 / AF2122/97)).